We begin with the raw amino-acid sequence, 77 residues long: Mitochondrial import inner membrane translocase subunit TIM8 (77 aa).

Met1 carries the post-translational modification N-acetylmethionine. Positions 35 to 59 (CWDKCITSAPGSKFSSSESSCLTHC) match the Twin CX3C motif motif. Cystine bridges form between Cys35–Cys59 and Cys39–Cys55.

The protein belongs to the small Tim family. As to quaternary structure, heterohexamer; composed of 3 copies of TIM8 and 3 copies of TIM13, named soluble 70 kDa complex. Associates with the TIM22 complex, whose core is composed of TIM22. Expressed in roots, flowers, young cotyledons and leaves.

The protein resides in the mitochondrion intermembrane space. In terms of biological role, mitochondrial intermembrane chaperone that participates in the import and insertion of some multi-pass transmembrane proteins into the mitochondrial inner membrane. Also required for the transfer of beta-barrel precursors from the TOM complex to the sorting and assembly machinery (SAM complex) of the outer membrane. Acts as a chaperone-like protein that protects the hydrophobic precursors from aggregation and guide them through the mitochondrial intermembrane space. The TIM8-TIM13 complex mediates the import of some proteins while the predominant TIM9-TIM10 70 kDa complex mediates the import of much more proteins. This chain is Mitochondrial import inner membrane translocase subunit TIM8 (TIM8), found in Arabidopsis thaliana (Mouse-ear cress).